Reading from the N-terminus, the 150-residue chain is Large ribosomal subunit protein uL13 (150 aa).

The segment at 130 to 150 (EHPHAAQQPKTLQLDPAASAQ) is disordered.

It belongs to the universal ribosomal protein uL13 family. Part of the 50S ribosomal subunit.

Functionally, this protein is one of the early assembly proteins of the 50S ribosomal subunit, although it is not seen to bind rRNA by itself. It is important during the early stages of 50S assembly. In Synechococcus sp. (strain CC9311), this protein is Large ribosomal subunit protein uL13.